We begin with the raw amino-acid sequence, 500 residues long: 4-aminobutyrate aminotransferase, mitochondrial (500 aa).

The N-terminal 28 residues, 1-28 (MASMLVAQRLACSFQHSYRLLVPGSRHI), are a transit peptide targeting the mitochondrion. C163 contacts [2Fe-2S] cluster. 164–165 (GS) lines the pyridoxal 5'-phosphate pocket. Residue C166 coordinates [2Fe-2S] cluster. R220 is a substrate binding site. An N6-succinyllysine modification is found at K231. K252 carries the post-translational modification N6-acetyllysine; alternate. K252 carries the N6-succinyllysine; alternate modification. 2 positions are modified to N6-acetyllysine: K279 and K318. At K357 the chain carries N6-(pyridoxal phosphate)lysine. T381 provides a ligand contact to pyridoxal 5'-phosphate. K413 carries the N6-acetyllysine; alternate modification. K413 carries the post-translational modification N6-succinyllysine; alternate. Residues K452 and K470 each carry the N6-acetyllysine modification.

It belongs to the class-III pyridoxal-phosphate-dependent aminotransferase family. As to quaternary structure, homodimer; disulfide-linked. Requires pyridoxal 5'-phosphate as cofactor. [2Fe-2S] cluster serves as cofactor.

The protein resides in the mitochondrion matrix. The catalysed reaction is 4-aminobutanoate + 2-oxoglutarate = succinate semialdehyde + L-glutamate. It carries out the reaction (S)-3-amino-2-methylpropanoate + 2-oxoglutarate = 2-methyl-3-oxopropanoate + L-glutamate. In terms of biological role, catalyzes the conversion of gamma-aminobutyrate and L-beta-aminoisobutyrate to succinate semialdehyde and methylmalonate semialdehyde, respectively. Can also convert delta-aminovalerate and beta-alanine. The chain is 4-aminobutyrate aminotransferase, mitochondrial (ABAT) from Bos taurus (Bovine).